The following is a 311-amino-acid chain: Probable manganese-dependent inorganic pyrophosphatase (311 aa).

Residues H9, D13, D15, D77, H99, and D151 each contribute to the Mn(2+) site.

The protein belongs to the PPase class C family. It depends on Mn(2+) as a cofactor.

It is found in the cytoplasm. It carries out the reaction diphosphate + H2O = 2 phosphate + H(+). The sequence is that of Probable manganese-dependent inorganic pyrophosphatase from Streptococcus equi subsp. zooepidemicus (strain MGCS10565).